Reading from the N-terminus, the 610-residue chain is Calcium-dependent protein kinase 1 (610 aa).

A lipid anchor (N-myristoyl glycine) is attached at Gly-2. Cys-5 carries the S-palmitoyl cysteine lipid modification. The tract at residues 17–133 is disordered; the sequence is VSAAMWRPRD…HMKRVSSAGL (117 aa). Composition is skewed to basic and acidic residues over residues 47–56 and 70–117; these read LRSRLSDEVQ and TDVE…DPPA. Residues 118 to 127 are compositionally biased toward basic residues; sequence KPKKPKHMKR. The Protein kinase domain maps to 150-408; it reads YSLGRKLGQG…AHQVLCHPWV (259 aa). Residues 156–164 and Lys-179 contribute to the ATP site; that span reads LGQGQFGTT. The active-site Proton acceptor is Asp-274. At Ser-314 the chain carries Phosphoserine. The tract at residues 414-444 is autoinhibitory domain; sequence APDKPLDSAVLSRMKQFSAMNKFKKMALRVI. 4 consecutive EF-hand domains span residues 451–486, 487–522, 523–558, and 559–592; these read EEIA…VGAN, LKES…LNKI, ERED…FGVE, and DVRI…GSIT. Residues Asp-464, Asp-466, Ser-468, Gln-470, Glu-475, Asp-500, Asp-502, Ser-504, Thr-506, Glu-511, Asp-536, Asp-538, Ser-540, Tyr-542, Glu-547, Asp-570, Asp-572, Asp-574, Arg-576, and Glu-581 each contribute to the Ca(2+) site.

It belongs to the protein kinase superfamily. Ser/Thr protein kinase family. CDPK subfamily. As to quaternary structure, interacts with 14-3-3 proteins.

It is found in the peroxisome membrane. The enzyme catalyses L-seryl-[protein] + ATP = O-phospho-L-seryl-[protein] + ADP + H(+). It carries out the reaction L-threonyl-[protein] + ATP = O-phospho-L-threonyl-[protein] + ADP + H(+). Its activity is regulated as follows. Activated by calcium. Autophosphorylation may play an important role in the regulation of the kinase activity. May play a role in signal transduction pathways that involve calcium as a second messenger. Phosphorylates the Ca(2+)-ATPase ACA2 resulting in the inhibition of its calcium activation. The chain is Calcium-dependent protein kinase 1 (CPK1) from Arabidopsis thaliana (Mouse-ear cress).